Here is a 505-residue protein sequence, read N- to C-terminus: Histidine ammonia-lyase (505 aa).

Residues 141–143 constitute a cross-link (5-imidazolinone (Ala-Gly)); the sequence is ASG. Ser142 is modified (2,3-didehydroalanine (Ser)).

This sequence belongs to the PAL/histidase family. Contains an active site 4-methylidene-imidazol-5-one (MIO), which is formed autocatalytically by cyclization and dehydration of residues Ala-Ser-Gly.

The protein resides in the cytoplasm. The catalysed reaction is L-histidine = trans-urocanate + NH4(+). The protein operates within amino-acid degradation; L-histidine degradation into L-glutamate; N-formimidoyl-L-glutamate from L-histidine: step 1/3. This chain is Histidine ammonia-lyase, found in Bacillus anthracis.